Here is a 722-residue protein sequence, read N- to C-terminus: Probable carboxypeptidase X1 (722 aa).

A signal peptide spans M1–G20. A disordered region spans residues A30–R54. A compositionally biased stretch (polar residues) spans A36–N49. 4 N-linked (GlcNAc...) asparagine glycosylation sites follow: N49, N200, N210, and N307. One can recognise an F5/8 type C domain in the interval P103–C263. C105 and C263 are disulfide-bonded. The Peptidase M14 domain maps to R287–V610. The Zn(2+) site is built by H349 and E352. N-linked (GlcNAc...) asparagine glycosylation is present at N461. H487 lines the Zn(2+) pocket. The active-site Proton donor/acceptor is the E580.

This sequence belongs to the peptidase M14 family. It depends on Zn(2+) as a cofactor. As to expression, strongly expressed in testis and spleen. Moderately expressed in salivary gland, brain, heart, lung, and kidney. Extremely low expression in liver and muscle. No expression in eye, adrenal, and white adipose tissues.

It localises to the secreted. Its function is as follows. May be involved in cell-cell interactions. No carboxypeptidase activity was found yet. In Mus musculus (Mouse), this protein is Probable carboxypeptidase X1 (Cpxm1).